The sequence spans 563 residues: Probable lysosomal cobalamin transporter (563 aa).

Transmembrane regions (helical) follow at residues 8 to 28, 40 to 60, 95 to 115, 144 to 164, and 188 to 208; these read LIWF…SVFI, FVTF…MLLP, VIYY…IPFA, YTLA…FAPM, and AFTF…VFYT. A glycan (N-linked (GlcNAc...) asparagine) is linked at N228. 4 consecutive transmembrane segments (helical) span residues 314–334, 374–394, 416–436, and 506–526; these read GGFS…MTVI, IIFA…VVAV, MLLA…SVVM, and FGAL…VILV. The interval 537-563 is disordered; that stretch reads ERQLDEDAEEAEEESLLASTGRSGNPT. Residues 539-551 are compositionally biased toward acidic residues; sequence QLDEDAEEAEEES.

It belongs to the LIMR family. LMBRD1 subfamily.

The protein localises to the lysosome membrane. Probable lysosomal cobalamin transporter. Required to export cobalamin from lysosomes allowing its conversion to cofactors. This is Probable lysosomal cobalamin transporter from Neosartorya fischeri (strain ATCC 1020 / DSM 3700 / CBS 544.65 / FGSC A1164 / JCM 1740 / NRRL 181 / WB 181) (Aspergillus fischerianus).